The following is an 843-amino-acid chain: Protein P (843 aa).

Residues 1 to 177 (MPLSYQHFRK…FCGSPYSWEQ (177 aa)) form a terminal protein domain (TP) region. A spacer region spans residues 178–346 (DLQHGRLVFQ…YCLCHIVNLI (169 aa)). Disordered regions lie at residues 220–269 (KSRL…HNCA) and 291–316 (TSKG…RSRS). A polymerase/reverse transcriptase domain (RT) region spans residues 347-690 (EDWGPCTEHG…YLNLYPVARQ (344 aa)). A Reverse transcriptase domain is found at 357–600 (EHRIRTPRTP…YSLNFMGYVI (244 aa)). Residues Asp-429, Asp-551, and Asp-552 each contribute to the Mg(2+) site.

Belongs to the hepadnaviridae P protein family.

The enzyme catalyses DNA(n) + a 2'-deoxyribonucleoside 5'-triphosphate = DNA(n+1) + diphosphate. It catalyses the reaction Endonucleolytic cleavage to 5'-phosphomonoester.. With respect to regulation, activated by host HSP70 and HSP40 in vitro to be able to bind the epsilon loop of the pgRNA. Because deletion of the RNase H region renders the protein partly chaperone-independent, the chaperones may be needed indirectly to relieve occlusion of the RNA-binding site by this domain. Inhibited by several reverse-transcriptase inhibitors: Lamivudine, Adefovir and Entecavir. In terms of biological role, multifunctional enzyme that converts the viral RNA genome into dsDNA in viral cytoplasmic capsids. This enzyme displays a DNA polymerase activity that can copy either DNA or RNA templates, and a ribonuclease H (RNase H) activity that cleaves the RNA strand of RNA-DNA heteroduplexes in a partially processive 3'- to 5'-endonucleasic mode. Neo-synthesized pregenomic RNA (pgRNA) are encapsidated together with the P protein, and reverse-transcribed inside the nucleocapsid. Initiation of reverse-transcription occurs first by binding the epsilon loop on the pgRNA genome, and is initiated by protein priming, thereby the 5'-end of (-)DNA is covalently linked to P protein. Partial (+)DNA is synthesized from the (-)DNA template and generates the relaxed circular DNA (RC-DNA) genome. After budding and infection, the RC-DNA migrates in the nucleus, and is converted into a plasmid-like covalently closed circular DNA (cccDNA). The activity of P protein does not seem to be necessary for cccDNA generation, and is presumably released from (+)DNA by host nuclear DNA repair machinery. The chain is Protein P from Homo sapiens (Human).